Here is a 491-residue protein sequence, read N- to C-terminus: MTSIWGQIQHILQNTLAPGLFKVWISPLAGEVDGSTLRVEAPNEFVAGWVRDRLFEDIRTAACGVIGDTVEVVVTAGAPAAAAPRPVLAPRPAVVEVVPTAAPVPSVVPAVEARPSGHAPRRLSAETQQAQEQLGLPLDWAPVPQSRTNWRFSFDDFIVGPNNELACAAARGMCRDGLMTDTLFLSSGPGLGKTHLLHAVGRSLCESSNRSNPNVAYLTAEEFASRLIAALKARDVERFKARYRDVDVLLLEDVHFLQGKEKMQDEVLATVKALQSRGSRIVFSSSFAARDLKNVDNQLVSRFCSGFLAGIERPDFDTRRRILREKARIYQVMLPDNVTDLLAERISTDVRQIESCLHNLILKAKLLNRQISLEMAFEIIGNYAQAETQLDFEGIVRMVCEGFGLSPEQLNSRSRKREYVVARNAAYLLARKHTDLSLKEIGDRFNRRHSTVLKGITALEREMNRETPLGRQVANTISLLERNGRITHARH.

A domain I, interacts with DnaA modulators region spans residues 1–68 (MTSIWGQIQH…RTAACGVIGD (68 aa)). Residues 68–146 (DTVEVVVTAG…PLDWAPVPQS (79 aa)) are domain II. The interval 147-364 (RTNWRFSFDD…SCLHNLILKA (218 aa)) is domain III, AAA+ region. Positions 190, 192, 193, and 194 each coordinate ATP. The segment at 365–491 (KLLNRQISLE…RNGRITHARH (127 aa)) is domain IV, binds dsDNA.

This sequence belongs to the DnaA family. As to quaternary structure, oligomerizes as a right-handed, spiral filament on DNA at oriC.

It localises to the cytoplasm. Its function is as follows. Plays an essential role in the initiation and regulation of chromosomal replication. ATP-DnaA binds to the origin of replication (oriC) to initiate formation of the DNA replication initiation complex once per cell cycle. Binds the DnaA box (a 9 base pair repeat at the origin) and separates the double-stranded (ds)DNA. Forms a right-handed helical filament on oriC DNA; dsDNA binds to the exterior of the filament while single-stranded (ss)DNA is stabiized in the filament's interior. The ATP-DnaA-oriC complex binds and stabilizes one strand of the AT-rich DNA unwinding element (DUE), permitting loading of DNA polymerase. After initiation quickly degrades to an ADP-DnaA complex that is not apt for DNA replication. Binds acidic phospholipids. The polypeptide is Chromosomal replication initiator protein DnaA (Nitratidesulfovibrio vulgaris (strain ATCC 29579 / DSM 644 / CCUG 34227 / NCIMB 8303 / VKM B-1760 / Hildenborough) (Desulfovibrio vulgaris)).